Consider the following 456-residue polypeptide: UDP-N-acetylglucosamine 1-carboxyvinyltransferase (456 aa).

34 to 35 (KN) serves as a coordination point for phosphoenolpyruvate. Arg104 provides a ligand contact to UDP-N-acetyl-alpha-D-glucosamine. The Proton donor role is filled by Cys128. Residue Cys128 is modified to 2-(S-cysteinyl)pyruvic acid O-phosphothioketal. Positions 319 and 341 each coordinate UDP-N-acetyl-alpha-D-glucosamine.

The protein belongs to the EPSP synthase family. MurA subfamily.

The protein resides in the cytoplasm. The enzyme catalyses phosphoenolpyruvate + UDP-N-acetyl-alpha-D-glucosamine = UDP-N-acetyl-3-O-(1-carboxyvinyl)-alpha-D-glucosamine + phosphate. The protein operates within cell wall biogenesis; peptidoglycan biosynthesis. In terms of biological role, cell wall formation. Adds enolpyruvyl to UDP-N-acetylglucosamine. This Prochlorococcus marinus (strain MIT 9301) protein is UDP-N-acetylglucosamine 1-carboxyvinyltransferase.